A 309-amino-acid chain; its full sequence is Elongation factor Ts (309 aa).

The interval 82 to 85 (TDFV) is involved in Mg(2+) ion dislocation from EF-Tu.

It belongs to the EF-Ts family.

The protein localises to the cytoplasm. Associates with the EF-Tu.GDP complex and induces the exchange of GDP to GTP. It remains bound to the aminoacyl-tRNA.EF-Tu.GTP complex up to the GTP hydrolysis stage on the ribosome. In Rickettsia felis (strain ATCC VR-1525 / URRWXCal2) (Rickettsia azadi), this protein is Elongation factor Ts.